The sequence spans 543 residues: ATP synthase subunit alpha (543 aa).

174 to 181 (GDRQTGKT) lines the ATP pocket. The tract at residues 521–543 (VEKKPDVDKAAPVDQEKIVAGEK) is disordered.

This sequence belongs to the ATPase alpha/beta chains family. As to quaternary structure, F-type ATPases have 2 components, CF(1) - the catalytic core - and CF(0) - the membrane proton channel. CF(1) has five subunits: alpha(3), beta(3), gamma(1), delta(1), epsilon(1). CF(0) has three main subunits: a(1), b(2) and c(9-12). The alpha and beta chains form an alternating ring which encloses part of the gamma chain. CF(1) is attached to CF(0) by a central stalk formed by the gamma and epsilon chains, while a peripheral stalk is formed by the delta and b chains.

It localises to the cell membrane. The catalysed reaction is ATP + H2O + 4 H(+)(in) = ADP + phosphate + 5 H(+)(out). Functionally, produces ATP from ADP in the presence of a proton gradient across the membrane. The alpha chain is a regulatory subunit. This is ATP synthase subunit alpha from Bifidobacterium longum (strain DJO10A).